The sequence spans 504 residues: Xylose import ATP-binding protein XylG (504 aa).

ABC transporter domains follow at residues 6–243 and 260–504; these read LEMK…VGRE and LKVD…TGGK. 38–45 provides a ligand contact to ATP; the sequence is GENGAGKS.

Belongs to the ABC transporter superfamily. Xylose importer (TC 3.A.1.2.4) family. In terms of assembly, the complex is composed of two ATP-binding proteins (XylG), two transmembrane proteins (XylH) and a solute-binding protein (XylF).

The protein localises to the cell membrane. The catalysed reaction is D-xylose(out) + ATP + H2O = D-xylose(in) + ADP + phosphate + H(+). Its function is as follows. Part of the ABC transporter complex XylFGH involved in xylose import. Responsible for energy coupling to the transport system. This is Xylose import ATP-binding protein XylG from Geobacillus kaustophilus (strain HTA426).